The primary structure comprises 549 residues: Phosphoenolpyruvate carboxykinase (ATP) (549 aa).

Residue 250–257 (GLSGTGKT) participates in ATP binding.

This sequence belongs to the phosphoenolpyruvate carboxykinase (ATP) family. In terms of assembly, homotetramer.

It carries out the reaction oxaloacetate + ATP = phosphoenolpyruvate + ADP + CO2. Its pathway is carbohydrate biosynthesis; gluconeogenesis. This Saccharomyces cerevisiae (strain ATCC 204508 / S288c) (Baker's yeast) protein is Phosphoenolpyruvate carboxykinase (ATP) (PCK1).